Reading from the N-terminus, the 928-residue chain is Retinoblastoma-associated protein (928 aa).

Residues 1-42 form a disordered region; it reads MPPKTPRKTAATAAAAAAEPPAPPPPPPPEEDPEQDSGPEDL. Pro2 bears the N,N-dimethylproline mark. A compositionally biased stretch (low complexity) spans 8–19; that stretch reads KTAATAAAAAAE. Acidic residues predominate over residues 29 to 39; it reads PEEDPEQDSGP. Phosphoserine is present on Ser37. Position 249 is a phosphoserine; by CDK1 (Ser249). Position 252 is a phosphothreonine; by CDK1 (Thr252). Thr356 carries the phosphothreonine modification. Thr373 carries the post-translational modification Phosphothreonine; by CDK1. Residues 373-579 form a domain A region; that stretch reads TPVRTVMNTI…FDLIKQSKDR (207 aa). Residues 373 to 771 are pocket; binds T and E1A; it reads TPVRTVMNTI…QRLKTNILQY (399 aa). At Ser567 the chain carries Phosphoserine; by CDK2. The tract at residues 580-639 is spacer; that stretch reads EGPTDHLESACPLNLPLQNNHTAADMYLSPVRSPKKKGSTTRVNSTANAETQATSAFQTQ. Residue Ser608 is modified to Phosphoserine. The segment at 610–632 is disordered; that stretch reads VRSPKKKGSTTRVNSTANAETQA. Residue Ser612 is modified to Phosphoserine; by CHEK2 and CHEK1. The segment covering 619-632 has biased composition (polar residues); it reads TTRVNSTANAETQA. Residue Ser624 is modified to Phosphoserine. Residues 640 to 771 form a domain B region; it reads KPLKSTSLSL…QRLKTNILQY (132 aa). The segment at 763 to 928 is interaction with LIMD1; the sequence is RLKTNILQYA…SMDTSNKEEK (166 aa). Residues 771–928 form a domain C; mediates interaction with E4F1 region; sequence YASTRPPTLS…SMDTSNKEEK (158 aa). 3 positions are modified to phosphoserine: Ser780, Ser788, and Ser795. Position 807 is a phosphoserine; by CDK1 and CDK3 (Ser807). N6-methyllysine; by SMYD2 is present on Lys810. Ser811 bears the Phosphoserine; by CDK1 and CDK3 mark. Thr821 is subject to Phosphothreonine; by CDK6. At Thr823 the chain carries Phosphothreonine. Position 826 is a phosphothreonine; by CDK4 (Thr826). Residue Thr841 is modified to Phosphothreonine. Ser855 carries the phosphoserine modification. Lys860 bears the N6-methyllysine; by SMYD2 mark. The short motif at 860–876 is the Bipartite nuclear localization signal element; it reads KRSAEGSNPPKPLKKLR. The tract at residues 860 to 928 is disordered; sequence KRSAEGSNPP…SMDTSNKEEK (69 aa). N6-acetyllysine; by PCAF is present on residues Lys873 and Lys874. The segment covering 915–928 has biased composition (basic and acidic residues); the sequence is KMNDSMDTSNKEEK.

Belongs to the retinoblastoma protein (RB) family. As to quaternary structure, the hypophosphorylated form interacts with and sequesters the E2F1 transcription factor, thereby inhibiting E2F1 transcription. Interacts with heterodimeric E2F/DP transcription factor complexes containing TFDP1 and either E2F1, E2F3, E2F4 or E2F5, or TFDP2 and E2F4. Interacts (when hyperphosphorylated and hypophosphorylated) with PKP3; the interaction inhibits RB1 interaction with and repression of the transcription factor E2F1, potentially via sequestering RB1 to the cytoplasm. The unphosphorylated form interacts with EID1, ARID3B, KDM5A, SUV39H1, MJD2A/JHDM3A and THOC1. Interacts with the N-terminal domain of TAF1. Interacts with SNW1, ATAD5, AATF, DNMT1, LIN9, LMNA, KMT5B, KMT5C, PELP1, UHRF2 and TMPO-alpha. Interacts with GRIP1 and UBR4. Interacts with ARID4A and KDM5B. Interacts with E4F1 and LIMD1. Interacts with SMARCA4/BRG1 and HDAC1. Interacts with PSMA3 and USP4. Interacts (when methylated at Lys-860) with L3MBTL1. Interacts with CHEK2; phosphorylates RB1. Interacts with CDK1 and CDK2. Interacts with PRMT2. Interacts with CEBPA. P-TEFB complex interacts with RB1; promotes phosphorylation of RB1. Interacts with RBBP9; the interaction disrupts RB1 binding to E2F1. Interacts with KAT2B/PCAF and EP300/P300. Interacts with PAX5. Interacts (phosphorylated and unphosphorylated) with BLCAP. May interact with NDC80. In terms of assembly, (Microbial infection) Interacts with adenovirus E1A protein. (Microbial infection) Interacts with HPV E7 protein. As to quaternary structure, (Microbial infection) Interacts with SV40 large T antigen. In terms of assembly, (Microbial infection) Interacts with human cytomegalovirus/HHV-5 proteins UL82 and UL123. (Microbial infection) Interacts with molluscum contagiosum virus protein MC007. Phosphorylated by CDK6 and CDK4, and subsequently by CDK2 at Ser-567 in G1, thereby releasing E2F1 which is then able to activate cell growth. Dephosphorylated at the late M phase. SV40 large T antigen, HPV E7 and adenovirus E1A bind to the underphosphorylated, active form of pRb. Phosphorylation at Thr-821 and Thr-826 promotes interaction between the C-terminal domain C and the Pocket domain, and thereby inhibits interactions with heterodimeric E2F/DP transcription factor complexes. Dephosphorylated at Ser-795 by calcineruin upon calcium stimulation. CDK3/cyclin-C-mediated phosphorylation at Ser-807 and Ser-811 is required for G0-G1 transition. Phosphorylated by CDK1 and CDK2 upon TGFB1-mediated apoptosis. Post-translationally, N-terminus is methylated by METTL11A/NTM1. Monomethylation at Lys-810 by SMYD2 enhances phosphorylation at Ser-807 and Ser-811, and promotes cell cycle progression. Monomethylation at Lys-860 by SMYD2 promotes interaction with L3MBTL1. In terms of processing, acetylated during keratinocyte differentiation. Acetylation at Lys-873 and Lys-874 regulates subcellular localization. Can be deacetylated by SIRT1. Expressed in the retina. Expressed in foreskin keratinocytes (at protein level).

Its subcellular location is the nucleus. The protein resides in the cytoplasm. Its function is as follows. Tumor suppressor that is a key regulator of the G1/S transition of the cell cycle. The hypophosphorylated form binds transcription regulators of the E2F family, preventing transcription of E2F-responsive genes. Both physically blocks E2Fs transactivating domain and recruits chromatin-modifying enzymes that actively repress transcription. Cyclin and CDK-dependent phosphorylation of RB1 induces its dissociation from E2Fs, thereby activating transcription of E2F responsive genes and triggering entry into S phase. RB1 also promotes the G0-G1 transition upon phosphorylation and activation by CDK3/cyclin-C. Directly involved in heterochromatin formation by maintaining overall chromatin structure and, in particular, that of constitutive heterochromatin by stabilizing histone methylation. Recruits and targets histone methyltransferases SUV39H1, KMT5B and KMT5C, leading to epigenetic transcriptional repression. Controls histone H4 'Lys-20' trimethylation. Inhibits the intrinsic kinase activity of TAF1. Mediates transcriptional repression by SMARCA4/BRG1 by recruiting a histone deacetylase (HDAC) complex to the c-FOS promoter. In resting neurons, transcription of the c-FOS promoter is inhibited by BRG1-dependent recruitment of a phospho-RB1-HDAC1 repressor complex. Upon calcium influx, RB1 is dephosphorylated by calcineurin, which leads to release of the repressor complex. (Microbial infection) In case of viral infections, interactions with SV40 large T antigen, HPV E7 protein or adenovirus E1A protein induce the disassembly of RB1-E2F1 complex thereby disrupting RB1's activity. The chain is Retinoblastoma-associated protein (RB1) from Homo sapiens (Human).